The primary structure comprises 93 residues: Alpha-conotoxin RVIIIA (93 aa).

An N-terminal signal peptide occupies residues 1 to 20 (MMSKMGAMFVLLLLFTLASS). Residues 21–46 (QQEGDVQARKTHPKREFQRILLRSGR) constitute a propeptide that is removed on maturation. A 4-carboxyglutamate mark is found at glutamate 63 and glutamate 68.

Contains 5 disulfide bonds. In terms of tissue distribution, expressed by the venom duct.

It localises to the secreted. Alpha-conotoxins act on postsynaptic membranes, they bind to the nicotinic acetylcholine receptors (nAChR) and thus inhibit them. This toxin provokes a nearly complete and slowly reversible inhibition of both the human adult (alpha-1-beta-1-epsilon-delta (CHRNA1-CHRNB1-CHRND-CHRNE)) and human fetal (alpha-1-beta-1-gamma-delta (CHRNA1-CHRNB1-CHRNG-CHRND)) neuromuscular nAChRs. It also reversibly blocks the neuromuscular alpha-7/CHRNA7 nAChR, the alpha-3-beta-2 (CHRNA3-CHRNB2) nAChR, the chimeric alpha-6 or -3/beta-3 or -2 (CHRNA6/CHRNA3-CHRNB2-CHRNB3) nAChR and with a low potency the alpha-4-beta-2 (CHRNA4-CHRNB2) nAChR. In addition, the toxin also inhibits the alpha-9-alpha-10 (CHRNA9-CHRNA10) nAChR with a high potency (IC(50)=187 nM). The polypeptide is Alpha-conotoxin RVIIIA (Conus radiatus (Rayed cone)).